A 273-amino-acid polypeptide reads, in one-letter code: Tetraspanin-8 (273 aa).

Residues 1-7 (MARCSNN) are Cytoplasmic-facing. The helical transmembrane segment at 8–28 (LVGILNFLVFLLSIPILAGGI) threads the bilayer. Topologically, residues 29-45 (WLSQKGSTECERFLDKP) are extracellular. A helical membrane pass occupies residues 46-66 (VIALGVFLMVVAIAGLIGSCC). At 67–75 (RVTWLLWVY) the chain is on the cytoplasmic side. Residues 76–96 (LFVMFLLILLVFCITVFAFVV) traverse the membrane as a helical segment. Topologically, residues 97-235 (TNKGAGEAIE…NVKSAWKKVA (139 aa)) are extracellular. Asn-192 carries an N-linked (GlcNAc...) asparagine glycan. Residues 236-256 (IVNIVFLVFLIIVYSVGCCAF) form a helical membrane-spanning segment. At 257–273 (RNNKRDDSYSRTYGYKP) the chain is on the cytoplasmic side.

The protein belongs to the tetraspanin (TM4SF) family.

It localises to the membrane. Functionally, may be involved in the regulation of cell differentiation. The chain is Tetraspanin-8 (TET8) from Arabidopsis thaliana (Mouse-ear cress).